Here is a 341-residue protein sequence, read N- to C-terminus: ATP-dependent 6-phosphofructokinase 3 (341 aa).

Residues G10, 72–73 (RV), and 102–105 (GEGT) contribute to the ATP site. Mg(2+) is bound at residue E103. Substrate-binding positions include 125-127 (TID), R162, 169-171 (MGR), E222, R266, and 272-275 (HVQR). Catalysis depends on D127, which acts as the Proton acceptor.

Belongs to the phosphofructokinase type A (PFKA) family. Mixed-substrate PFK group III subfamily. As to quaternary structure, homodimer or homotetramer. Mg(2+) is required as a cofactor.

The protein localises to the cytoplasm. It carries out the reaction beta-D-fructose 6-phosphate + ATP = beta-D-fructose 1,6-bisphosphate + ADP + H(+). It functions in the pathway carbohydrate degradation; glycolysis; D-glyceraldehyde 3-phosphate and glycerone phosphate from D-glucose: step 3/4. In terms of biological role, catalyzes the phosphorylation of D-fructose 6-phosphate to fructose 1,6-bisphosphate by ATP, the first committing step of glycolysis. This is ATP-dependent 6-phosphofructokinase 3 from Streptomyces coelicolor (strain ATCC BAA-471 / A3(2) / M145).